We begin with the raw amino-acid sequence, 993 residues long: DNA double-strand break repair Rad50 ATPase (993 aa).

ATP is bound by residues Arg12, 32-38 (NGSGKSS), and Gln133. Coiled-coil stretches lie at residues 192–222 (LENL…LEKL) and 402–493 (EELK…LEKT). The region spanning 452–556 (ENELKEKYED…KLNEIDSFKL (105 aa)) is the Zinc-hook domain. Residues Cys497 and Cys500 each coordinate Zn(2+). Coiled-coil stretches lie at residues 570-612 (KVEE…LEND), 646-677 (DSSK…EINL), and 702-731 (ETEK…VLKN).

It belongs to the SMC family. RAD50 subfamily. Homodimer. Forms a heterotetramer composed of two Mre11 subunits and two Rad50 subunits. Zn(2+) is required as a cofactor.

In terms of biological role, part of the Rad50/Mre11 complex, which is involved in the early steps of DNA double-strand break (DSB) repair. The complex may facilitate opening of the processed DNA ends to aid in the recruitment of HerA and NurA. Rad50 controls the balance between DNA end bridging and DNA resection via ATP-dependent structural rearrangements of the Rad50/Mre11 complex. In Methanococcus maripaludis (strain DSM 14266 / JCM 13030 / NBRC 101832 / S2 / LL), this protein is DNA double-strand break repair Rad50 ATPase.